The primary structure comprises 279 residues: Biotin synthase (279 aa).

In terms of domain architecture, Radical SAM core spans 2–228; the sequence is KTIMLCAISS…NARIMIAGGR (227 aa). 3 residues coordinate [4Fe-4S] cluster: Cys-17, Cys-21, and Cys-24. [2Fe-2S] cluster is bound by residues Cys-61, Cys-96, Cys-154, and Arg-221.

The protein belongs to the radical SAM superfamily. Biotin synthase family. As to quaternary structure, homodimer. It depends on [4Fe-4S] cluster as a cofactor. [2Fe-2S] cluster serves as cofactor.

The enzyme catalyses (4R,5S)-dethiobiotin + (sulfur carrier)-SH + 2 reduced [2Fe-2S]-[ferredoxin] + 2 S-adenosyl-L-methionine = (sulfur carrier)-H + biotin + 2 5'-deoxyadenosine + 2 L-methionine + 2 oxidized [2Fe-2S]-[ferredoxin]. Its pathway is cofactor biosynthesis; biotin biosynthesis; biotin from 7,8-diaminononanoate: step 2/2. Catalyzes the conversion of dethiobiotin (DTB) to biotin by the insertion of a sulfur atom into dethiobiotin via a radical-based mechanism. The protein is Biotin synthase of Campylobacter curvus (strain 525.92).